The sequence spans 315 residues: 4-diphosphocytidyl-2-C-methyl-D-erythritol kinase (315 aa).

Residue K26 is part of the active site. 111 to 121 (PLAGGLAGGSA) contacts ATP. The active site involves D153.

This sequence belongs to the GHMP kinase family. IspE subfamily.

The catalysed reaction is 4-CDP-2-C-methyl-D-erythritol + ATP = 4-CDP-2-C-methyl-D-erythritol 2-phosphate + ADP + H(+). It participates in isoprenoid biosynthesis; isopentenyl diphosphate biosynthesis via DXP pathway; isopentenyl diphosphate from 1-deoxy-D-xylulose 5-phosphate: step 3/6. Functionally, catalyzes the phosphorylation of the position 2 hydroxy group of 4-diphosphocytidyl-2C-methyl-D-erythritol. In Salinispora arenicola (strain CNS-205), this protein is 4-diphosphocytidyl-2-C-methyl-D-erythritol kinase.